We begin with the raw amino-acid sequence, 270 residues long: Orotidine 5'-phosphate decarboxylase (270 aa).

Lysine 95 functions as the Proton donor in the catalytic mechanism.

It belongs to the OMP decarboxylase family. Type 2 subfamily.

The enzyme catalyses orotidine 5'-phosphate + H(+) = UMP + CO2. It participates in pyrimidine metabolism; UMP biosynthesis via de novo pathway; UMP from orotate: step 2/2. The chain is Orotidine 5'-phosphate decarboxylase from Azoarcus sp. (strain BH72).